Consider the following 235-residue polypeptide: MRPSNREHDQLRPVTITRNFTNYAEGSVLVEFGQTKVICNASIVEGVPRFLKGKNQGWITAEYGMLPRATHSRTEREASKGKQGGRTLEIQRLIGRSLRACIDLKVLGENTITLDCDVIQADGGTRTAAITGSCVAMRDAIHWMVQREKIKKMPAFNYVAAVSVGIYRGQPVLDLDYAEDVLAETDMNVVMNEQGHFIEVQGTAEDNSFNREQLNSMLSLAEIGIPQLIEIQKNA.

Residues Arg-86 and 124–126 (GTR) contribute to the phosphate site.

Belongs to the RNase PH family. As to quaternary structure, homohexameric ring arranged as a trimer of dimers.

The enzyme catalyses tRNA(n+1) + phosphate = tRNA(n) + a ribonucleoside 5'-diphosphate. In terms of biological role, phosphorolytic 3'-5' exoribonuclease that plays an important role in tRNA 3'-end maturation. Removes nucleotide residues following the 3'-CCA terminus of tRNAs; can also add nucleotides to the ends of RNA molecules by using nucleoside diphosphates as substrates, but this may not be physiologically important. Probably plays a role in initiation of 16S rRNA degradation (leading to ribosome degradation) during starvation. The polypeptide is Ribonuclease PH (Legionella pneumophila (strain Paris)).